A 214-amino-acid polypeptide reads, in one-letter code: Ribonuclease P protein component 3 (214 aa).

Belongs to the eukaryotic/archaeal RNase P protein component 3 family. Consists of a catalytic RNA component and at least 4-5 protein subunits. Forms a subcomplex with Rnp2 which stimulates the catalytic RNA.

Its subcellular location is the cytoplasm. The enzyme catalyses Endonucleolytic cleavage of RNA, removing 5'-extranucleotides from tRNA precursor.. Functionally, part of ribonuclease P, a protein complex that generates mature tRNA molecules by cleaving their 5'-ends. The RNA is catalytic, but its KM for pre-tRNA is 170-fold decreased in the presence of the 4 known protein subunits (Rnp1-4). The protein subunits also decrease the amount of Mg(2+) needed for activity. This Pyrococcus furiosus (strain ATCC 43587 / DSM 3638 / JCM 8422 / Vc1) protein is Ribonuclease P protein component 3.